A 563-amino-acid polypeptide reads, in one-letter code: Adenine deaminase (563 aa).

The protein belongs to the metallo-dependent hydrolases superfamily. Adenine deaminase family. Requires Mn(2+) as cofactor.

The enzyme catalyses adenine + H2O + H(+) = hypoxanthine + NH4(+). The polypeptide is Adenine deaminase (Lactiplantibacillus plantarum (strain ATCC BAA-793 / NCIMB 8826 / WCFS1) (Lactobacillus plantarum)).